Reading from the N-terminus, the 158-residue chain is Cytochrome c-type biogenesis protein CcmE (158 aa).

Residues 1 to 23 are Cytoplasmic-facing; sequence MNSQSFKNFPSLKFISKKRRKER. The chain crosses the membrane as a helical; Signal-anchor for type II membrane protein span at residues 24-44; the sequence is LLMVLLCLFIMAITTGLIVYA. At 45–158 the chain is on the periplasmic side; sequence MRNTANFFRT…DRLKKHHDIK (114 aa). Heme contacts are provided by His138 and Tyr142.

It belongs to the CcmE/CycJ family.

Its subcellular location is the cell inner membrane. Functionally, heme chaperone required for the biogenesis of c-type cytochromes. Transiently binds heme delivered by CcmC and transfers the heme to apo-cytochromes in a process facilitated by CcmF and CcmH. This is Cytochrome c-type biogenesis protein CcmE from Bartonella bacilliformis (strain ATCC 35685 / KC583 / Herrer 020/F12,63).